A 200-amino-acid polypeptide reads, in one-letter code: Recombination protein RecR (200 aa).

The C4-type zinc-finger motif lies at 57–72 (CRLCRTLTEEELCPQC). A Toprim domain is found at 80 to 175 (TLLCVVEGPT…VASRIAHGVP (96 aa)).

This sequence belongs to the RecR family.

Its function is as follows. May play a role in DNA repair. It seems to be involved in an RecBC-independent recombinational process of DNA repair. It may act with RecF and RecO. This is Recombination protein RecR from Pseudomonas syringae pv. tomato (strain ATCC BAA-871 / DC3000).